The following is a 571-amino-acid chain: Potassium-transporting ATPase potassium-binding subunit (571 aa).

A run of 12 helical transmembrane segments spans residues 5–25 (GWMQIALYGAVVLALVRPLGG), 64–84 (LAYAGAMVLFNVAGFVLLYAL), 136–156 (GLTHQNFVSAASGMAVAVALI), 179–199 (LYVLLPLCTVLALFYVSQGMP), 220–240 (VGPVASQVAIKMLGTNGGGFF), 254–274 (LSNFLQMLSIFVIGAALTNVF), 285–305 (WAILTAMGLLFLAGVTVTYWA), 330–350 (FGIAASALFAVITTAASCGAV), 375–395 (IIGGVGAGLYGMLVFVVVAIF), 421–441 (MLGILCLPLMMLGFTAFATVV), 488–508 (LAIGMLVGRFFVKIPVLAIAG), and 527–547 (GGLFVGLLVGVVLIIGGLTFF).

The protein belongs to the KdpA family. The system is composed of three essential subunits: KdpA, KdpB and KdpC.

The protein localises to the cell inner membrane. In terms of biological role, part of the high-affinity ATP-driven potassium transport (or Kdp) system, which catalyzes the hydrolysis of ATP coupled with the electrogenic transport of potassium into the cytoplasm. This subunit binds the periplasmic potassium ions and delivers the ions to the membrane domain of KdpB through an intramembrane tunnel. The protein is Potassium-transporting ATPase potassium-binding subunit of Methylorubrum extorquens (strain PA1) (Methylobacterium extorquens).